The following is a 319-amino-acid chain: Lipoyl synthase (319 aa).

A compositionally biased stretch (polar residues) spans Met1–Pro12. The disordered stretch occupies residues Met1 to Pro32. [4Fe-4S] cluster contacts are provided by Cys61, Cys66, Cys72, Cys87, Cys91, Cys94, and Ser300. Residues Trp73–Leu289 enclose the Radical SAM core domain.

Belongs to the radical SAM superfamily. Lipoyl synthase family. It depends on [4Fe-4S] cluster as a cofactor.

It is found in the cytoplasm. The catalysed reaction is [[Fe-S] cluster scaffold protein carrying a second [4Fe-4S](2+) cluster] + N(6)-octanoyl-L-lysyl-[protein] + 2 oxidized [2Fe-2S]-[ferredoxin] + 2 S-adenosyl-L-methionine + 4 H(+) = [[Fe-S] cluster scaffold protein] + N(6)-[(R)-dihydrolipoyl]-L-lysyl-[protein] + 4 Fe(3+) + 2 hydrogen sulfide + 2 5'-deoxyadenosine + 2 L-methionine + 2 reduced [2Fe-2S]-[ferredoxin]. Its pathway is protein modification; protein lipoylation via endogenous pathway; protein N(6)-(lipoyl)lysine from octanoyl-[acyl-carrier-protein]: step 2/2. Catalyzes the radical-mediated insertion of two sulfur atoms into the C-6 and C-8 positions of the octanoyl moiety bound to the lipoyl domains of lipoate-dependent enzymes, thereby converting the octanoylated domains into lipoylated derivatives. This chain is Lipoyl synthase, found in Bradyrhizobium sp. (strain BTAi1 / ATCC BAA-1182).